A 440-amino-acid polypeptide reads, in one-letter code: 2-methylisoborneol synthase (440 aa).

Disordered stretches follow at residues 1-33 (MPDSGTLGTPPPEQGPTPPTTLPDVPAPVIPSA) and 46-74 (LHPPVTVPDPAPPPPPAPAAGNPPDTVTG). Pro residues-rich tracts occupy residues 9-29 (TPPPEQGPTPPTTLPDVPAPV) and 50-63 (VTVPDPAPPPPPAP). Mg(2+)-binding residues include D197, D198, E202, N345, S349, and E353.

The protein belongs to the terpene synthase family. 2-methylisoborneol synthase subfamily. Mg(2+) serves as cofactor.

The catalysed reaction is (E)-2-methylgeranyl diphosphate + H2O = 2-methylisoborneol + diphosphate. In terms of biological role, catalyzes the cyclization of 2-methylgeranyl diphosphate (2-MeGPP) to 2-methylisoborneol (2-MIB), which likely involves the intermediacy of 2-methyllinalyl diphosphate. Is also able to catalyze the cyclization of geranyl diphosphate (GPP), albeit with much lower efficiency, leading to the formation of a complex mixture of cyclic monoterpenes, consisting of alpha-pinene (6%), beta-pinene (23%), limonene (32%), gamma-terpinene (29%), and delta-terpinene (10%). This Streptomyces coelicolor (strain ATCC BAA-471 / A3(2) / M145) protein is 2-methylisoborneol synthase.